Consider the following 167-residue polypeptide: Glutathione peroxidase 1 (167 aa).

The active site involves Cys41.

Belongs to the glutathione peroxidase family.

It carries out the reaction 2 glutathione + H2O2 = glutathione disulfide + 2 H2O. In terms of biological role, may constitute a glutathione peroxidase-like protective system against oxidative stresses. This chain is Glutathione peroxidase 1 (GPXHA-1), found in Helianthus annuus (Common sunflower).